The following is a 767-amino-acid chain: MNSLLRCCLIKPINIKNTTSFINKLNPKSIIQKSNNYNNINKNILNKFKDSSSNYFINSNKILEICNNNNNNNKYNVNKRNYSSSSNSGNNNNNNYNNKNNNNNNESFYKKFENSFEIKRIKDILFIIVGTFVIFKIYDNKIGIVFCENEIDKETILNDPYDKIPNEIIVELKDSAKDDNIIEESDEDDGIKKISSFKLFFKTIGNDIWLFGFGIITAFFSSWVGLQIPKVFGVLIDCTKNGDSLQGPAIQAIFILLAQAGLNFLYSTMISVACERYSARLRSTLFGAMLEQEIGFFDQNSTGDLINRLSSDVQLVRSALKHSVSLGVKSFGQIVGGVISLILISPKLSLGMMTILPTMVSVGTFYAGWLKSLSVRSQRAQAQSTIVAEEAIGNIRTVQAFSNQHYESERFIEKNQHSLALSTESGVQIGIFQGVTSLALNSVSLLVYWYGGTLVSRGEMTGGQLTSFIIHTMNMQSSFSQLSILFTQIMSAMGGMQRITELINRVPLINSNQGFKLRELKGEIKFINVDFKYPTRPHVHVLNGLNLTLKPGQVVALAGSSGGGKSTIAGLLERFYDISNGDITIDGYSIKQLNAKWLRSRIGIVSQEPSLFATTILENLRYGNPNATEDEIIEAAKLANAHQFISNFPKGYETIVGERGVQLSGGQKQRIAIARAILKNPQIIILDEATSALDSQSELLVQTALDNLMKGRTTLVIAHRLSTVQNADLIGVLSHGKIAEFGNHNELMNHKGLYYKLVQRQLSQQQQ.

Residues 81–104 (NYSSSSNSGNNNNNNYNNKNNNNN) form a disordered region. 5 consecutive transmembrane segments (helical) span residues 208 to 228 (IWLF…GLQI), 252 to 272 (AIFI…MISV), 324 to 344 (VSLG…LILI), 350 to 370 (LGMM…AGWL), and 429 to 449 (IGIF…LVYW). The ABC transmembrane type-1 domain occupies 211 to 491 (FGFGIITAFF…LSILFTQIMS (281 aa)). The region spanning 524–760 (IKFINVDFKY…KGLYYKLVQR (237 aa)) is the ABC transporter domain. 559 to 566 (GSSGGGKS) lines the ATP pocket.

The protein belongs to the ABC transporter superfamily. ABCB family. Multidrug resistance exporter (TC 3.A.1.201) subfamily.

It localises to the membrane. The polypeptide is ABC transporter B family member 4 (abcB4) (Dictyostelium discoideum (Social amoeba)).